The following is a 328-amino-acid chain: Organic solute transporter alpha-like protein (328 aa).

The Extracellular portion of the chain corresponds to 1-44 (MNASENYFTMDPTENISQVLDQNRNNTNSLRTHPTVEEYYENMT). 4 N-linked (GlcNAc...) asparagine glycosylation sites follow: Asn-2, Asn-15, Asn-25, and Asn-42. A helical membrane pass occupies residues 45–65 (AFLSLAIFIASLLTILNISIF). Residues 66 to 84 (ATTVSRLRRHLDKPLLGPS) lie on the Cytoplasmic side of the membrane. The helical transmembrane segment at 85 to 105 (IMMVGLYPIISVAALVTILVP) threads the bilayer. Tyr-106 is a topological domain (extracellular). A helical membrane pass occupies residues 107-127 (SWFICHTVMHVMFMVGGPVFR). The Cytoplasmic segment spans residues 128–177 (TLLFRYVGSEQNYVKETAGEAVQLNTPPCCCCCLCLPMVIPTKAKLCISR). The chain crosses the membrane as a helical span at residues 178–198 (YMVWQMPFWQGSIMLVMNILY). Over 199–208 (YRDIQLYRQV) the chain is Extracellular. A helical membrane pass occupies residues 209 to 229 (MFFFIPFIVCSIVLGAWSLQI). Residues 230 to 247 (TVRMITKVRGDYQLRKKM) lie on the Cytoplasmic side of the membrane. A helical membrane pass occupies residues 248–265 (FCLQLVVMLCKLQYLVLY). At 266-287 (DQLDGIKMGGEYPINHTVYKQT) the chain is on the extracellular side. Asn-280 is a glycosylation site (N-linked (GlcNAc...) asparagine). Residues 288-308 (IINILILVEMVLVSMMVQSAY) form a helical membrane-spanning segment. Residues 309–328 (RTPVQVQIDEVNKEKEVTRI) lie on the Cytoplasmic side of the membrane.

The protein belongs to the OST-alpha family.

It localises to the cell membrane. Probable transporter. The sequence is that of Organic solute transporter alpha-like protein from Drosophila melanogaster (Fruit fly).